We begin with the raw amino-acid sequence, 418 residues long: Putative ion-transport protein YfeO (418 aa).

The next 12 membrane-spanning stretches (helical) occupy residues L10–V30, D54–I74, A99–P119, E120–P140, I149–I169, L186–P206, I223–C243, V258–V278, D300–F320, G322–H342, V343–V363, and L371–M391.

Belongs to the chloride channel (TC 2.A.49) family.

The protein localises to the cell membrane. The chain is Putative ion-transport protein YfeO from Escherichia coli (strain 55989 / EAEC).